Here is a 426-residue protein sequence, read N- to C-terminus: UPF0229 protein YeaH (426 aa).

The segment covering 78-92 has biased composition (basic and acidic residues); the sequence is GNDHFIQNDRIERPQ. A disordered region spans residues 78-108; the sequence is GNDHFIQNDRIERPQDGGGSGSGNGQASQDG.

This sequence belongs to the UPF0229 family.

The chain is UPF0229 protein YeaH from Salmonella arizonae (strain ATCC BAA-731 / CDC346-86 / RSK2980).